We begin with the raw amino-acid sequence, 134 residues long: Ribosome-binding factor A (134 aa).

The protein belongs to the RbfA family. Monomer. Binds 30S ribosomal subunits, but not 50S ribosomal subunits or 70S ribosomes.

The protein resides in the cytoplasm. Functionally, one of several proteins that assist in the late maturation steps of the functional core of the 30S ribosomal subunit. Associates with free 30S ribosomal subunits (but not with 30S subunits that are part of 70S ribosomes or polysomes). Required for efficient processing of 16S rRNA. May interact with the 5'-terminal helix region of 16S rRNA. The protein is Ribosome-binding factor A of Cyanothece sp. (strain PCC 7425 / ATCC 29141).